The primary structure comprises 379 residues: Dual-specificity RNA methyltransferase RlmN (379 aa).

The Proton acceptor role is filled by glutamate 97. Positions 103-343 constitute a Radical SAM core domain; it reads QGGRGTLCVS…VRTTRGDDID (241 aa). A disulfide bridge connects residues cysteine 110 and cysteine 346. [4Fe-4S] cluster-binding residues include cysteine 117, cysteine 121, and cysteine 124. Residues 171–172, serine 203, 225–227, and asparagine 303 each bind S-adenosyl-L-methionine; these read GE and SLH. The active-site S-methylcysteine intermediate is cysteine 346.

It belongs to the radical SAM superfamily. RlmN family. The cofactor is [4Fe-4S] cluster.

Its subcellular location is the cytoplasm. The catalysed reaction is adenosine(2503) in 23S rRNA + 2 reduced [2Fe-2S]-[ferredoxin] + 2 S-adenosyl-L-methionine = 2-methyladenosine(2503) in 23S rRNA + 5'-deoxyadenosine + L-methionine + 2 oxidized [2Fe-2S]-[ferredoxin] + S-adenosyl-L-homocysteine. The enzyme catalyses adenosine(37) in tRNA + 2 reduced [2Fe-2S]-[ferredoxin] + 2 S-adenosyl-L-methionine = 2-methyladenosine(37) in tRNA + 5'-deoxyadenosine + L-methionine + 2 oxidized [2Fe-2S]-[ferredoxin] + S-adenosyl-L-homocysteine. In terms of biological role, specifically methylates position 2 of adenine 2503 in 23S rRNA and position 2 of adenine 37 in tRNAs. m2A2503 modification seems to play a crucial role in the proofreading step occurring at the peptidyl transferase center and thus would serve to optimize ribosomal fidelity. The sequence is that of Dual-specificity RNA methyltransferase RlmN from Pseudomonas aeruginosa (strain ATCC 15692 / DSM 22644 / CIP 104116 / JCM 14847 / LMG 12228 / 1C / PRS 101 / PAO1).